The primary structure comprises 537 residues: Asparagine-rich protein (537 aa).

Disordered regions lie at residues 1-22 (YNNN…QNTN), 187-254 (NMNI…NNNF), 336-372 (YNNN…YGYD), 399-479 (LNNN…DDWG), and 509-528 (DLSK…MKKD). 2 stretches are compositionally biased toward low complexity: residues 336–347 (YNNNESNTANPN) and 399–469 (LNNN…NQNN). Residues 470–479 (NEDEDDDDWG) are compositionally biased toward acidic residues. A compositionally biased stretch (basic and acidic residues) spans 509 to 518 (DLSKKGNDGK).

The polypeptide is Asparagine-rich protein (Plasmodium falciparum).